Consider the following 156-residue polypeptide: ATP synthase subunit b (156 aa).

Residues 13-33 form a helical membrane-spanning segment; the sequence is AFIIFVWCCMKFVWPPLMAAI.

Belongs to the ATPase B chain family. As to quaternary structure, F-type ATPases have 2 components, F(1) - the catalytic core - and F(0) - the membrane proton channel. F(1) has five subunits: alpha(3), beta(3), gamma(1), delta(1), epsilon(1). F(0) has three main subunits: a(1), b(2) and c(10-14). The alpha and beta chains form an alternating ring which encloses part of the gamma chain. F(1) is attached to F(0) by a central stalk formed by the gamma and epsilon chains, while a peripheral stalk is formed by the delta and b chains.

Its subcellular location is the cell inner membrane. Its function is as follows. F(1)F(0) ATP synthase produces ATP from ADP in the presence of a proton or sodium gradient. F-type ATPases consist of two structural domains, F(1) containing the extramembraneous catalytic core and F(0) containing the membrane proton channel, linked together by a central stalk and a peripheral stalk. During catalysis, ATP synthesis in the catalytic domain of F(1) is coupled via a rotary mechanism of the central stalk subunits to proton translocation. Functionally, component of the F(0) channel, it forms part of the peripheral stalk, linking F(1) to F(0). The polypeptide is ATP synthase subunit b (Aeromonas salmonicida (strain A449)).